Here is a 120-residue protein sequence, read N- to C-terminus: MKLKVLPPTLRKNNRYLALDIKVKSVISKDDLVNIVWNGCIRFFGENGTGNFSLWVMKFYELEKTDEYNHYQAILRCQREYVDEVRASLALIYKHNRKDISVSTIGLSGTIKACQKFIEK.

This sequence belongs to the eukaryotic/archaeal RNase P protein component 2 family. As to quaternary structure, consists of a catalytic RNA component and at least 4-5 protein subunits.

Its subcellular location is the cytoplasm. The enzyme catalyses Endonucleolytic cleavage of RNA, removing 5'-extranucleotides from tRNA precursor.. Its function is as follows. Part of ribonuclease P, a protein complex that generates mature tRNA molecules by cleaving their 5'-ends. The sequence is that of Ribonuclease P protein component 2 from Methanobrevibacter smithii (strain ATCC 35061 / DSM 861 / OCM 144 / PS).